We begin with the raw amino-acid sequence, 105 residues long: Heat shock protein HspQ (105 aa).

Belongs to the HspQ family.

The protein localises to the cytoplasm. In terms of biological role, involved in the degradation of certain denaturated proteins, including DnaA, during heat shock stress. In Escherichia fergusonii (strain ATCC 35469 / DSM 13698 / CCUG 18766 / IAM 14443 / JCM 21226 / LMG 7866 / NBRC 102419 / NCTC 12128 / CDC 0568-73), this protein is Heat shock protein HspQ.